The chain runs to 101 residues: Large ribosomal subunit protein bL28 (101 aa).

Belongs to the bacterial ribosomal protein bL28 family.

This chain is Large ribosomal subunit protein bL28, found in Rhodopseudomonas palustris (strain BisA53).